Consider the following 1380-residue polypeptide: Respiration factor 2 (1380 aa).

2 consecutive C2H2-type zinc fingers follow at residues 151–173 (FLCPTCTRGFVRQEHLKRHQHSH) and 179–202 (YLCIFCGRCFARRDLVLRHQQKLH). The interval 208–231 (TGDPRRMTPAPNSTSSFASKRRHS) is disordered. 2 positions are modified to phosphoserine: serine 231 and serine 322. Disordered stretches follow at residues 413 to 445 (NLNLFNNDPSGQQQQQQQQQQNSTSSTIVNSNN), 544 to 584 (SPKN…NIDP), 624 to 643 (SRSSIPNKSPPNHSATSLNH), and 652 to 688 (LNLSLNGSTDLPSTPQNQLKEPSYSDPISHSSHKRRR). Positions 424-445 (QQQQQQQQQQNSTSSTIVNSNN) are enriched in low complexity. A Phosphoserine modification is found at serine 544. Polar residues predominate over residues 544–569 (SPKNPPTTVSDSSSTINFNPGTNNLL). Positions 575 to 584 (PNDKDSNIDP) are enriched in basic and acidic residues. The span at 624–634 (SRSSIPNKSPP) shows a compositional bias: low complexity. The residue at position 632 (serine 632) is a Phosphoserine. A compositionally biased stretch (polar residues) spans 652–681 (LNLSLNGSTDLPSTPQNQLKEPSYSDPISH).

Belongs to the RSF2/TDA9 family.

The protein localises to the nucleus. In terms of biological role, transcription factor that regulates expression of both nuclear and mitochondrial genes, and more specifically those required for glycerol-based growth and respiration. This is Respiration factor 2 (RSF2) from Saccharomyces cerevisiae (strain ATCC 204508 / S288c) (Baker's yeast).